Here is a 183-residue protein sequence, read N- to C-terminus: 1,6-anhydro-N-acetylmuramyl-L-alanine amidase AmpD (183 aa).

Positions 30-167 (LLVVHNISLP…APDRKTDPGP (138 aa)) constitute an N-acetylmuramoyl-L-alanine amidase domain. H34 provides a ligand contact to Zn(2+). E116 (proton acceptor) is an active-site residue. Positions 154 and 164 each coordinate Zn(2+).

It belongs to the N-acetylmuramoyl-L-alanine amidase 2 family. Requires Zn(2+) as cofactor.

The protein localises to the cytoplasm. It catalyses the reaction Hydrolyzes the link between N-acetylmuramoyl residues and L-amino acid residues in certain cell-wall glycopeptides.. Functionally, involved in cell wall peptidoglycan recycling. Specifically cleaves the amide bond between the lactyl group of N-acetylmuramic acid and the alpha-amino group of the L-alanine in degradation products containing an anhydro N-acetylmuramyl moiety. Is also involved in beta-lactamase induction. The chain is 1,6-anhydro-N-acetylmuramyl-L-alanine amidase AmpD (ampD) from Escherichia coli (strain K12).